The chain runs to 250 residues: tRNA-specific adenosine deaminase subunit TAD2 (250 aa).

In terms of domain architecture, CMP/dCMP-type deaminase spans 1–119 (MQHIKHMRTA…ERFGGNGTVL (119 aa)). Position 54 (His54) interacts with Zn(2+). Glu56 serves as the catalytic Proton donor. Residues Cys88 and Cys91 each contribute to the Zn(2+) site.

This sequence belongs to the cytidine and deoxycytidylate deaminase family. ADAT2 subfamily. As to quaternary structure, heterodimer with TAD3. Zn(2+) is required as a cofactor.

It is found in the cytoplasm. The protein localises to the nucleus. It carries out the reaction adenosine(34) in tRNA + H2O + H(+) = inosine(34) in tRNA + NH4(+). Structural subunit of tRNA-specific adenosine deaminase, which deaminates adenosine-34 (the first, also called wobble position of the anticodon) to inosine in many tRNAs. Inosine-34 allows the decoding of 3 different nucleotides at the third position of mRNA codons, as inosine is able to pair with U, C, and A. The sequence is that of tRNA-specific adenosine deaminase subunit TAD2 (TAD2) from Saccharomyces cerevisiae (strain ATCC 204508 / S288c) (Baker's yeast).